A 601-amino-acid polypeptide reads, in one-letter code: FAD-binding monooxygenase stcW (601 aa).

Residues phenylalanine 42–serine 43, glutamate 64, tryptophan 73, aspartate 84, tyrosine 90, and valine 133 each bind FAD.

This sequence belongs to the FAD-binding monooxygenase family. It depends on FAD as a cofactor.

The protein operates within mycotoxin biosynthesis; sterigmatocystin biosynthesis. In terms of biological role, FAD-binding monooxygenase; part of the gene cluster that mediates the biosynthesis of sterigmatocystin (ST), a polyketide-derived furanocoumarin which is part of the most toxic and carcinogenic compounds among the known mycotoxins. The first step in the biosynthesis of sterigmatocystin is the production of hexanoate by the fatty acid synthase (FAS) units stcJ and stcK. The polyketide backbone is assembled by the non-reducing polyketide synthase stcA by condensation of the starter hexanoyl-CoA and 7 malonyl-CoA extender units followed by cyclization and release of norsolorinic acid. Norsolorinic acid is the first stable intermediate in the biosynthesis of sterigmatocystin and is converted into averantin (AVN) by the ketoreductase stcE which reduces the hexanoate ketone to an alcohol. Averantin is then oxidized into 5'-hydroxyaverantin (HAVN) by the cytochrome P450 monooxygenase stcF. 5'-hydroxyaverantin is further converted to 5'-oxyaverantin (OAVN) by the 5'-hydroxyaverantin dehydrogenase stcG. The next step is the conversion of OAVN into averufin (AVF) which is catalyzed by a yet to be identified enzyme. The cytochrome P450 monooxygenase stcB and the flavin-binding monooxygenase stcW are both required for the conversion of averufin to 1-hydroxyversicolorone. The esterase stcI probably catalyzes the formation of versiconal hemiacetal acetate from 1-hydroxyversicolorone. The oxydoreductase stcN then probably catalyzes the biosynthetic step from versiconal to versicolorin B (VERB). The next step is performed by the versicolorin B desaturase stcL to produce versicolorin A (VERA). The ketoreductase stcU and the cytochrome P450 monooxygenase stcS are involved in the conversion of versicolorin A to demethylsterigmatocystin. The Baeyer-Villiger oxidas stcQ and the reductase stcR might be involved in the biosynthetic step from versicolorin A to demethylsterigmatocystin. The final step in the biosynthesis of sterigmatocystin is the methylation of demethylsterigmatocystin catalyzed by the methyltransferase stcP. The chain is FAD-binding monooxygenase stcW from Emericella nidulans (strain FGSC A4 / ATCC 38163 / CBS 112.46 / NRRL 194 / M139) (Aspergillus nidulans).